The primary structure comprises 185 residues: Ribosome-recycling factor (185 aa).

This sequence belongs to the RRF family.

It localises to the cytoplasm. Functionally, responsible for the release of ribosomes from messenger RNA at the termination of protein biosynthesis. May increase the efficiency of translation by recycling ribosomes from one round of translation to another. In Helicobacter pylori (strain Shi470), this protein is Ribosome-recycling factor.